The sequence spans 1010 residues: DENN domain-containing protein 1A (1010 aa).

Residues 13 to 143 enclose the uDENN domain; it reads FEVYIEVNRP…HGHPIPEPGT (131 aa). In terms of domain architecture, cDENN spans 160–296; sequence ELPSIPENRN…VVSALKNRIR (137 aa). One can recognise a dDENN domain in the interval 298 to 375; it reads MSTTTGDGVA…DGRLDLLNSG (78 aa). An FXDXF motif motif is present at residues 378–382; sequence FSDVF. Residues 455–554 are disordered; it reads GFSTATEEPL…EATVKEPQST (100 aa). Residues 472–482 are compositionally biased toward basic and acidic residues; the sequence is IEKKRGEERRP. The segment covering 493 to 502 has biased composition (basic residues); the sequence is PRPHVPRRPK. Polar residues predominate over residues 509–524; that stretch reads SRTTAGSSPDQPQQYR. Residues 538–548 are compositionally biased toward basic and acidic residues; the sequence is SPEKDSSEATV. The short motif at 560–569 is the Clathrin box element; the sequence is SLLEDIFSNL.

It localises to the cytoplasmic vesicle. The protein resides in the clathrin-coated vesicle membrane. The protein localises to the presynaptic cell membrane. Functionally, guanine nucleotide exchange factor (GEF) regulating clathrin-mediated endocytosis through RAB35 activation. Promotes the exchange of GDP to GTP, converting inactive GDP-bound RAB35 into its active GTP-bound form. Regulates clathrin-mediated endocytosis of synaptic vesicles and mediates exit from early endosomes. Binds phosphatidylinositol-phosphates (PtdInsPs), with some preference for PtdIns(3)P. This is DENN domain-containing protein 1A (dennd1a) from Xenopus laevis (African clawed frog).